Here is a 573-residue protein sequence, read N- to C-terminus: Transcription factor E3 (573 aa).

Position 47 is a phosphoserine; by MTOR (serine 47). A disordered region spans residues 91 to 151 (TLSASSSAEG…SPAPASPAIS (61 aa)). Residues 107–126 (SSSSSSRVLLRQQLMRAQAQ) show a composition bias toward low complexity. Over residues 127 to 136 (EQERRERREQ) the composition is skewed to basic and acidic residues. Over residues 137 to 151 (ASSFPSPAPASPAIS) the composition is skewed to low complexity. Residue arginine 186 is modified to Asymmetric dimethylarginine. The disordered stretch occupies residues 209-248 (LASQALTPPPGGASVQPLPTPEAAHAPGPTSSAPNSPMAL). Residues 258 to 269 (EIDDVIDEIISL) are strong transcription activation domain. Serine 319 is subject to Phosphoserine; by MTOR. Lysine 337 is covalently cross-linked (Glycyl lysine isopeptide (Lys-Gly) (interchain with G-Cter in SUMO2)). Residues 344-397 (QKKDNHNLIERRRRFNINDRIKELGTLIPKSSDPEMRWNKGTILKASVDYIRKL) enclose the bHLH domain. The short motif at 354 to 357 (RRRR) is the Nuclear localization signal element. The tract at residues 407-428 (LESRQRSLEQANRSLQLRIQEL) is leucine-zipper. Residues 531 to 573 (VGGLSGGTLSPLRAASDPLLSSVSPAVSKASSRRSSFSMEEES) form a disordered region. Low complexity predominate over residues 537–573 (GTLSPLRAASDPLLSSVSPAVSKASSRRSSFSMEEES). Serine 540, serine 546, serine 552, serine 554, serine 558, and serine 566 each carry phosphoserine.

It belongs to the MiT/TFE family. As to quaternary structure, homodimer and heterodimer; with TFEB or MITF. Interacts with RRAGC/RagC GDP-bound and RRAGD/RagD GDP-bound; promoting its recruitment to lysosomal membrane in the presence of nutrients. Phosphorylation ar Ser-47 and Ser-319 by MTOR via non-canonical mTORC1 pathway regulates its stability and subcellular location, respectively. When nutrients are present, phosphorylation by MTOR at Ser-47 promotes ubiquitination by the SCF(BTRC) complex, followed by degradation. When nutrients are present, phosphorylation by MTOR at Ser-319 also promotes association with 14-3-3/YWHA adapters and retention in the cytosol. Phosphorylation at Ser-47 plays a more critical role than phosphorylation at Ser-319 for TFE3 inactivation. Inhibition of mTORC1, starvation and lysosomal disruption, promotes dephosphorylation and transcription factor activity. In terms of processing, ubiquitinated by the SCF(BTRC) and SCF(FBXW11) complexes following phosphorylation at Ser-47 by MTOR, leading to its degradation by the proteasome. Post-translationally, sumoylated; does not affect dimerization with MITF.

It is found in the cytoplasm. It localises to the cytosol. The protein localises to the nucleus. The protein resides in the lysosome membrane. Its function is as follows. Transcription factor that acts as a master regulator of lysosomal biogenesis and immune response. Specifically recognizes and binds E-box sequences (5'-CANNTG-3'); efficient DNA-binding requires dimerization with itself or with another MiT/TFE family member such as TFEB or MITF. Involved in the cellular response to amino acid availability by acting downstream of MTOR: in the presence of nutrients, TFE3 phosphorylation by MTOR promotes its inactivation. Upon starvation or lysosomal stress, inhibition of MTOR induces TFE3 dephosphorylation, resulting in transcription factor activity. Specifically recognizes and binds the CLEAR-box sequence (5'-GTCACGTGAC-3') present in the regulatory region of many lysosomal genes, leading to activate their expression, thereby playing a central role in expression of lysosomal genes. Maintains the pluripotent state of embryonic stem cells by promoting the expression of genes such as ESRRB; mTOR-dependent TFE3 cytosolic retention and inactivation promotes exit from pluripotency. Required to maintain the naive pluripotent state of hematopoietic stem cell; mTOR-dependent cytoplasmic retention of TFE3 promotes the exit of hematopoietic stem cell from pluripotency. TFE3 activity is also involved in the inhibition of neuronal progenitor differentiation. Acts as a positive regulator of browning of adipose tissue by promoting expression of target genes; mTOR-dependent phosphorylation promotes cytoplasmic retention of TFE3 and inhibits browning of adipose tissue. In association with TFEB, activates the expression of CD40L in T-cells, thereby playing a role in T-cell-dependent antibody responses in activated CD4(+) T-cells and thymus-dependent humoral immunity. Specifically recognizes the MUE3 box, a subset of E-boxes, present in the immunoglobulin enhancer. It also binds very well to a USF/MLTF site. May regulate lysosomal positioning in response to nutrient deprivation by promoting the expression of PIP4P1. The polypeptide is Transcription factor E3 (Bos taurus (Bovine)).